The sequence spans 367 residues: METLATRLDVCQERLLDLYEKDSNKLEDQIEHWKCIRLECALQYKAREMGYKVLQHQALPALAVSKGKGHKAIELQLALETLQKTVYSTEPWTLQDTCLERWNAPPTGCLKRRGQTVDVIFDGHQDNTMQYVMWGDIYYQNCDGEGWTKVCSNIDAMGIYYMDAEHKVYYVDFKKEASKYGEYGQWEVRMGSSIIFSPASVSSTEEALSISSTGTAEHTRPANSTPRTDNSTKAIPCTPPPRKRARVYSTDQQPHSTSDPVGCDNDRHISDDNNKNQGRHTSSGDTTPIVHFKGEPNTLKCFRQRIQKYKHLFEQASSTWHWACVPGTTKNRGIVTLTYSSVEQRQQFLVTVRIPPSISMSLGVMSL.

Residues Met1 to Ser202 are transactivation domain. Composition is skewed to polar residues over residues Ala207 to Lys233 and Ser249 to Asp259. The disordered stretch occupies residues Ala207–His291. Over residues Asp264–Asn274 the composition is skewed to basic and acidic residues. The segment covering Lys275 to Thr286 has biased composition (polar residues). A DNA-binding domain region spans residues Thr286–Leu367. A Glycyl lysine isopeptide (Lys-Gly) (interchain with G-Cter in SUMO) cross-link involves residue Lys293.

Belongs to the papillomaviridae E2 protein family. In terms of assembly, binds DNA as homodimer. Interacts with protein E1; this interaction greatly increases E1 DNA-binding activity. Interacts with protein L1; this interaction enhances E2-dependent replication and transcription activation. Interacts with protein L2; this interaction inhibits E2 transcriptional activity but not DNA replication function E2. Interacts with protein E7; this interaction inhibits E7 oncogenic activity. Interacts with host TAF1; this interaction modulates E2-dependent transcriptional regulation. Interacts with host BRD4; this interaction mediates E2 transcriptional activation function. Additionally, the interaction with host BRD4 on mitotic chromosomes mediates tethering of the viral genome. Interacts with host TOPBP1; this interaction is required for optimal viral DNA replication. In terms of processing, phosphorylated. Sumoylation plays a regulatory role in E2 transcriptional activity.

It localises to the host nucleus. Functionally, plays a role in the initiation of viral DNA replication. A dimer of E2 interacts with a dimer of E1 in order to improve specificity of E1 DNA binding activity. Once the complex recognizes and binds DNA at specific sites, the E2 dimer is removed from DNA. E2 also regulates viral transcription through binding to the E2RE response element (5'-ACCNNNNNNGGT-3') present in multiple copies in the regulatory regions of the viral genome. Activates or represses transcription depending on E2RE's position with regards to proximal promoter elements including the TATA-box. Repression occurs by sterically hindering the assembly of the transcription initiation complex. The sequence is that of Regulatory protein E2 from Human papillomavirus type 54.